Reading from the N-terminus, the 82-residue chain is ATP synthase subunit c, chloroplastic (82 aa).

2 helical membrane passes run 3–23 (PLICAASVVGAGLAIGLGAIG) and 57–77 (LAFMEALTIYGLVVALALMFA).

The protein belongs to the ATPase C chain family. F-type ATPases have 2 components, F(1) - the catalytic core - and F(0) - the membrane proton channel. F(1) has five subunits: alpha(3), beta(3), gamma(1), delta(1), epsilon(1). F(0) has four main subunits: a(1), b(1), b'(1) and c(10-14). The alpha and beta chains form an alternating ring which encloses part of the gamma chain. F(1) is attached to F(0) by a central stalk formed by the gamma and epsilon chains, while a peripheral stalk is formed by the delta, b and b' chains.

The protein resides in the plastid. The protein localises to the chloroplast thylakoid membrane. In terms of biological role, f(1)F(0) ATP synthase produces ATP from ADP in the presence of a proton or sodium gradient. F-type ATPases consist of two structural domains, F(1) containing the extramembraneous catalytic core and F(0) containing the membrane proton channel, linked together by a central stalk and a peripheral stalk. During catalysis, ATP synthesis in the catalytic domain of F(1) is coupled via a rotary mechanism of the central stalk subunits to proton translocation. Functionally, key component of the F(0) channel; it plays a direct role in translocation across the membrane. A homomeric c-ring of between 10-14 subunits forms the central stalk rotor element with the F(1) delta and epsilon subunits. The protein is ATP synthase subunit c, chloroplastic of Ostreococcus tauri.